The chain runs to 511 residues: Voltage-gated potassium channel KCNC1 (511 aa).

The Cytoplasmic segment spans residues 1–190 (MGQGDESERI…EDPYSSRYAR (190 aa)). The residue at position 44 (Ser-44) is a Phosphoserine. Zn(2+)-binding residues include His-77, Cys-83, Cys-104, and Cys-105. The interval 121–147 (SFGGAPLDNSADDADADGPGDSGDGED) is disordered. 4 positions are modified to phosphoserine: Ser-130, Ser-142, Ser-158, and Ser-160. A compositionally biased stretch (acidic residues) spans 130–147 (SADDADADGPGDSGDGED). Residues 191–209 (YVAFASLFFILVSITTFCL) traverse the membrane as a helical segment. 2 N-linked (GlcNAc...) asparagine glycosylation sites follow: Asn-220 and Asn-229. A helical transmembrane segment spans residues 248–267 (IEGVCVVWFTFEFLMRVVFC). The Cytoplasmic segment spans residues 268–276 (PNKVEFIKN). A helical membrane pass occupies residues 277-295 (SLNIIDFVAILPFYLEVGL). The helical; Voltage-sensor transmembrane segment at 309-331 (FLRVVRFVRILRIFKLTRHFVGL) threads the bilayer. Residues 332–344 (RVLGHTLRASTNE) lie on the Cytoplasmic side of the membrane. A helical membrane pass occupies residues 345-366 (FLLLIIFLALGVLIFATMIYYA). Residues Thr-400, Leu-401, Gly-402, and Tyr-403 each contribute to the K(+) site. The Selectivity filter signature appears at 400–405 (TLGYGD). Residues 415–436 (LVGALCALAGVLTIAMPVPVIV) traverse the membrane as a helical segment. Residues 437 to 511 (NNFGMYYSLA…GRKPLRGMSI (75 aa)) are Cytoplasmic-facing. Ser-474 is modified (phosphoserine). Position 483 is a phosphothreonine (Thr-483).

The protein belongs to the potassium channel family. C (Shaw) (TC 1.A.1.2) subfamily. Kv3.1/KCNC1 sub-subfamily. As to quaternary structure, homotetramer. Homomultimer. Heteromultimer with KCNG3, KCNG4 and KCNV2. Heteromultimer with KCNC2. Heterotetramer with KCNC3. Interacts with the ancillary subunits KCNE1 and KCNE2; the interaction modulates channel activity. In terms of processing, N-glycosylated; contains sialylated glycans. As to expression, detected in cerebellum. Detected in brain (at protein level). Detected in brain.

It localises to the cell membrane. The protein localises to the cell projection. Its subcellular location is the axon. The protein resides in the presynaptic cell membrane. The catalysed reaction is K(+)(in) = K(+)(out). Functionally, voltage-gated potassium channel that opens in response to the voltage difference across the membrane and through which potassium ions pass in accordance with their electrochemical gradient. The mechanism is time-dependent and inactivation is slow. Plays an important role in the rapid repolarization of fast-firing brain neurons. Can form functional homotetrameric channels and heterotetrameric channels that contain variable proportions of KCNC2, and possibly other family members as well. Contributes to fire sustained trains of very brief action potentials at high frequency in pallidal neurons. This is Voltage-gated potassium channel KCNC1 from Mus musculus (Mouse).